Here is an 877-residue protein sequence, read N- to C-terminus: Phosphoenolpyruvate carboxylase (877 aa).

Catalysis depends on residues His137 and Lys544.

The protein belongs to the PEPCase type 1 family. Requires Mg(2+) as cofactor.

The catalysed reaction is oxaloacetate + phosphate = phosphoenolpyruvate + hydrogencarbonate. Functionally, forms oxaloacetate, a four-carbon dicarboxylic acid source for the tricarboxylic acid cycle. This chain is Phosphoenolpyruvate carboxylase, found in Edwardsiella ictaluri (strain 93-146).